Here is a 360-residue protein sequence, read N- to C-terminus: Dihydroorotate dehydrogenase (quinone) (360 aa).

FMN is bound by residues 67-71 and Thr-91; that span reads AGLDK. Lys-71 serves as a coordination point for substrate. 116 to 120 lines the substrate pocket; that stretch reads NRMGF. The FMN site is built by Asn-145 and Asn-176. Position 176 (Asn-176) interacts with substrate. Catalysis depends on Ser-179, which acts as the Nucleophile. Asn-181 serves as a coordination point for substrate. Positions 222 and 250 each coordinate FMN. 251–252 serves as a coordination point for substrate; it reads NT. FMN-binding positions include Gly-272, Gly-301, and 322–323; that span reads YS.

Belongs to the dihydroorotate dehydrogenase family. Type 2 subfamily. As to quaternary structure, monomer. Requires FMN as cofactor.

The protein localises to the cell membrane. It catalyses the reaction (S)-dihydroorotate + a quinone = orotate + a quinol. The protein operates within pyrimidine metabolism; UMP biosynthesis via de novo pathway; orotate from (S)-dihydroorotate (quinone route): step 1/1. Catalyzes the conversion of dihydroorotate to orotate with quinone as electron acceptor. This is Dihydroorotate dehydrogenase (quinone) from Deinococcus deserti (strain DSM 17065 / CIP 109153 / LMG 22923 / VCD115).